The primary structure comprises 326 residues: Protein MICROTUBULE BINDING PROTEIN 2C (326 aa).

Composition is skewed to polar residues over residues 1 to 15 (MYEQ…QSDS) and 34 to 46 (PHQS…SGNE). Disordered regions lie at residues 1-46 (MYEQ…SGNE) and 71-132 (ERSS…KALA). The stretch at 132-183 (AGAEKEEMSRLREQVNDLQTKLSEKEEVLKSMEMSKNQVNEIQEKLEATNRL) forms a coiled coil.

The protein belongs to the microtubule binding protein 2C family. As to quaternary structure, interacts with STM. Expressed in seedlings, roots, flowers and developing ovules.

Its subcellular location is the cytoplasm. The protein resides in the cytoskeleton. Functionally, prevents homeodomain proteins (e.g. STM) association to plasmodesmata and, consequently, cell-to-cell transport. Binds to RNA. Alters STM RNA binding capacity. Regulates cytoskeleton (e.g. actin) organization that determinates cell shape. Regulates stomata patterning and drought tolerance. Involved in restricting tobamovirus (e.g. oilseed rape mosaic virus) infectivity, probably by interfering with cell-to-cell virus movement. This is Protein MICROTUBULE BINDING PROTEIN 2C from Arabidopsis thaliana (Mouse-ear cress).